The primary structure comprises 212 residues: Adenine phosphoribosyltransferase (212 aa).

The protein belongs to the purine/pyrimidine phosphoribosyltransferase family. Homodimer.

It localises to the cytoplasm. The enzyme catalyses AMP + diphosphate = 5-phospho-alpha-D-ribose 1-diphosphate + adenine. Its pathway is purine metabolism; AMP biosynthesis via salvage pathway; AMP from adenine: step 1/1. Its function is as follows. Catalyzes a salvage reaction resulting in the formation of AMP, that is energically less costly than de novo synthesis. The polypeptide is Adenine phosphoribosyltransferase (Mycobacterium tuberculosis (strain ATCC 25618 / H37Rv)).